The sequence spans 458 residues: Cysteine protease ATG4C (458 aa).

At Met1 the chain carries N-acetylmethionine. Cys111 functions as the Nucleophile in the catalytic mechanism. Catalysis depends on residues Asp345 and His347. A Phosphoserine modification is found at Ser451. The residue at position 452 (Thr452) is a Phosphothreonine.

It belongs to the peptidase C54 family.

Its subcellular location is the cytoplasm. The enzyme catalyses [protein]-C-terminal L-amino acid-glycyl-phosphatidylethanolamide + H2O = [protein]-C-terminal L-amino acid-glycine + a 1,2-diacyl-sn-glycero-3-phosphoethanolamine. With respect to regulation, inhibited by N-ethylmaleimide. Its function is as follows. Cysteine protease that plays a key role in autophagy by mediating both proteolytic activation and delipidation of ATG8 family proteins. The protease activity is required for proteolytic activation of ATG8 family proteins: cleaves the C-terminal amino acid of ATG8 proteins MAP1LC3 and GABARAPL2, to reveal a C-terminal glycine. Exposure of the glycine at the C-terminus is essential for ATG8 proteins conjugation to phosphatidylethanolamine (PE) and insertion to membranes, which is necessary for autophagy. In addition to the protease activity, also mediates delipidation of ATG8 family proteins. Catalyzes delipidation of PE-conjugated forms of ATG8 proteins during macroautophagy. Compared to ATG4B, the major protein for proteolytic activation of ATG8 proteins, shows weaker ability to cleave the C-terminal amino acid of ATG8 proteins, while it displays stronger delipidation activity. In contrast to other members of the family, weakly or not involved in phagophore growth during mitophagy. The sequence is that of Cysteine protease ATG4C from Mus musculus (Mouse).